A 394-amino-acid polypeptide reads, in one-letter code: Quinolinate synthase (394 aa).

Positions 57 and 74 each coordinate iminosuccinate. C121 lines the [4Fe-4S] cluster pocket. Iminosuccinate contacts are provided by residues 153–155 (YMN) and S174. C250 is a [4Fe-4S] cluster binding site. Iminosuccinate is bound by residues 276–278 (HPE) and T293. Residue C340 participates in [4Fe-4S] cluster binding.

The protein belongs to the quinolinate synthase family. Type 3 subfamily. [4Fe-4S] cluster serves as cofactor.

The protein resides in the cytoplasm. It carries out the reaction iminosuccinate + dihydroxyacetone phosphate = quinolinate + phosphate + 2 H2O + H(+). It functions in the pathway cofactor biosynthesis; NAD(+) biosynthesis; quinolinate from iminoaspartate: step 1/1. Its function is as follows. Catalyzes the condensation of iminoaspartate with dihydroxyacetone phosphate to form quinolinate. The sequence is that of Quinolinate synthase from Nocardioides sp. (strain ATCC BAA-499 / JS614).